The following is a 469-amino-acid chain: Ribosomal protein uS12 methylthiotransferase RimO (469 aa).

One can recognise an MTTase N-terminal domain in the interval 34-144; sequence NKIGFVSLGC…VLEHVHQFAP (111 aa). Cys43, Cys79, Cys108, Cys176, Cys180, and Cys183 together coordinate [4Fe-4S] cluster. The 238-residue stretch at 162–399 folds into the Radical SAM core domain; that stretch reads LTPKHYAYLK…MLVQQEISAA (238 aa). A TRAM domain is found at 402–468; it reads QKRIGSTMKV…EYDLWGSLVR (67 aa).

The protein belongs to the methylthiotransferase family. RimO subfamily. Requires [4Fe-4S] cluster as cofactor.

Its subcellular location is the cytoplasm. It carries out the reaction L-aspartate(89)-[ribosomal protein uS12]-hydrogen + (sulfur carrier)-SH + AH2 + 2 S-adenosyl-L-methionine = 3-methylsulfanyl-L-aspartate(89)-[ribosomal protein uS12]-hydrogen + (sulfur carrier)-H + 5'-deoxyadenosine + L-methionine + A + S-adenosyl-L-homocysteine + 2 H(+). Its function is as follows. Catalyzes the methylthiolation of an aspartic acid residue of ribosomal protein uS12. In Vibrio vulnificus (strain YJ016), this protein is Ribosomal protein uS12 methylthiotransferase RimO.